Consider the following 497-residue polypeptide: MYHVPLIPRDAGREETIFRINQSLQKLLRVSDEIFDRVEHRITRIHGKAEAIDRRTEVLEKKLESLQESDKVITFTLPRQLPKLPEEPPTSTSLFRINIDTEHFPGSEELPAFRRADDHVLRPCEPIDFTYELNKPDKFFLTSQVLKEYEQKGWERYKKRLLGGLRELSRSPEHIAELFYAGTSIPAFEGVSGDFSKKALDADDDGGTSRSGRTTDELAQLRLHEQLLEDTALSSTLMQEDSLDDNHPLAFRINFNEKKKKTAKMVEMPDSLPNLKGHAHDFTLRDPEIDEDRLLDILPADDQIPEASEPTEAEADAPTTFILPPPPPPMKLDPSPQPAATPVEITEIPPIISPPAPPPPPPPPPPPPPPQTPSASSSVTFSPTKSVDGGRSDLMAAIRAAGGAGNAKLSRIAEKPKRKGKFDGILESSALLGASETPRNSAPAPDGGGGGGDLMSALSKALDARRKAINGKVEAQPPAKVSSTIPAPPNFDDEEWD.

Residues Glu306 to Asp497 form a disordered region. The span at Leu323–Ala339 shows a compositional bias: pro residues. The span at Thr341–Pro350 shows a compositional bias: low complexity. The segment covering Ile351–Thr372 has biased composition (pro residues). The region spanning Gly390–Ile412 is the WH2 domain.

Belongs to the WASH1 family. Component of the WASH core complex. Component of the DHIC (ddl-1-containing hsf-1 inhibitory) complex, which contains at least ddl-1, ddl-2, hsb-1 and hsf-1. Within the complex, interacts with ddl-1. Formation of the DHIC may be dependent upon the Insulin/IGF-1-like signaling (IIS) mediated pathway. As to expression, expressed in several neurons located throughout the body.

Acts as a component of the WASH core complex that functions as a nucleation-promoting factor (NPF) at the surface of endosomes, where it recruits and activates the Arp2/3 complex to induce actin polymerization, playing a key role in the fission of tubules that serve as transport intermediates during endosome sorting. Acts as a component of the DHIC (ddl-1-containing hsf-1 inhibitory complex) which modulates lifespan by sequestering the heat shock transcription factor hsf-1 to negatively regulate its binding to DNA and its transcriptional activity. This Caenorhabditis elegans protein is WASH complex subunit homolog 1.